The sequence spans 283 residues: ATP phosphoribosyltransferase (283 aa).

This sequence belongs to the ATP phosphoribosyltransferase family. Long subfamily. Requires Mg(2+) as cofactor.

The protein localises to the cytoplasm. It catalyses the reaction 1-(5-phospho-beta-D-ribosyl)-ATP + diphosphate = 5-phospho-alpha-D-ribose 1-diphosphate + ATP. The protein operates within amino-acid biosynthesis; L-histidine biosynthesis; L-histidine from 5-phospho-alpha-D-ribose 1-diphosphate: step 1/9. Feedback inhibited by histidine. Its function is as follows. Catalyzes the condensation of ATP and 5-phosphoribose 1-diphosphate to form N'-(5'-phosphoribosyl)-ATP (PR-ATP). Has a crucial role in the pathway because the rate of histidine biosynthesis seems to be controlled primarily by regulation of HisG enzymatic activity. The chain is ATP phosphoribosyltransferase from Azobacteroides pseudotrichonymphae genomovar. CFP2.